Here is a 359-residue protein sequence, read N- to C-terminus: NADPH HC-toxin reductase 2 (359 aa).

Residues R39, 67–68 (DL), 87–89 (VAT), Y177, K181, 206–209 (LGLV), and T221 contribute to the NADP(+) site. The Proton donor role is filled by K181.

This sequence belongs to the NAD(P)-dependent epimerase/dehydratase family.

In tandem with Hm1, NADPH-dependent HC toxin reductase (HCTR), which inactivates HC toxin, a cyclic tetrapeptide produced by the fungus Cochliobolus carbonum to permit infection and acting as an inhibitor of host histone deacetylases (HDACs), thus conferring resistance against C.carbonum race 1 in resistant cultivars (e.g. cv. B73 and cv. Wisconsin 22). Catalyzes the production of 8-hydroxy derivative of HC-toxin via the reduction of the 8-keto group of 2-amino-9,10-epoxy-8-oxo-decanoic acid, an amino acid of the HC-toxin. This chain is NADPH HC-toxin reductase 2, found in Zea mays (Maize).